Consider the following 96-residue polypeptide: Early E1A 11 kDa protein (96 aa).

2 disordered regions span residues 1 to 29 and 72 to 96; these read MNSR…QDQQ and LAQG…EESD. Residues 75–96 show a composition bias toward acidic residues; that stretch reads GEEEEEEEDGAEDIEENGEESD.

The protein is Early E1A 11 kDa protein of Murine adenovirus A serotype 1 (MAdV-1).